A 322-amino-acid polypeptide reads, in one-letter code: MNKIYEDNSFTIGNTPLVRLNNIGNGNILAKIESRNPSFSVKCRIGANMIWDAEKKGRLNKNIEIIEATSGNTGIALAYVAAARNYSLTLIMPDSMSIERRKLLKSLGAHLILTNGKHGMKGAISKANEIVSLNTKRYLLLKQFENPANPEIHQKTTGPEIWKDTKGNIDILISGVGTGGTITGITKYIKIKEGKKDLISVAVEPLESPVITQFLSGKKIKPGLHKIQGIGAGFIPKNLDLSLIDRIITVSSEEAIFNAKKIMKKEGILSGISSGAAIAAALKIQKENDFKNKNIVVILPSSGERYLSTELFSRSFKNENNY.

Residues Asn-8 and Arg-35 each contribute to the hydrogen sulfide site. An N6-(pyridoxal phosphate)lysine modification is found at Lys-42. Residues Asn-72 and 177-181 (GTGGT) each bind pyridoxal 5'-phosphate. Residue Leu-269 participates in hydrogen sulfide binding. Residue Ser-273 participates in pyridoxal 5'-phosphate binding.

It belongs to the cysteine synthase/cystathionine beta-synthase family. Homodimer. Pyridoxal 5'-phosphate serves as cofactor.

It catalyses the reaction O-acetyl-L-serine + hydrogen sulfide = L-cysteine + acetate. It participates in amino-acid biosynthesis; L-cysteine biosynthesis; L-cysteine from L-serine: step 2/2. This Buchnera aphidicola subsp. Schizaphis graminum (strain Sg) protein is Cysteine synthase (cysK).